The sequence spans 149 residues: Arginine repressor (149 aa).

The protein belongs to the ArgR family.

It is found in the cytoplasm. It participates in amino-acid biosynthesis; L-arginine biosynthesis [regulation]. In terms of biological role, regulates arginine biosynthesis genes. This chain is Arginine repressor, found in Geobacillus kaustophilus (strain HTA426).